Reading from the N-terminus, the 132-residue chain is T-cell receptor alpha chain V region CTL-F3 (132 aa).

An N-terminal signal peptide occupies residues 1–22 (MNMRPDTCSVLVLLLMLRRNNG). Residues 23–114 (DSVTQTEGLV…DSALYYCALS (92 aa)) are v segment. An N-linked (GlcNAc...) asparagine glycan is attached at N43. C44 and C111 are oxidised to a cystine. The segment at 115–132 (NAGAKLTFGGGTRLTVRP) is j segment.

The polypeptide is T-cell receptor alpha chain V region CTL-F3 (Mus musculus (Mouse)).